The primary structure comprises 220 residues: Glutathione S-transferase-like protein FUS3 (220 aa).

The 82-residue stretch at 3 to 84 (SFGTLYTYMP…YVAQSGPQAS (82 aa)) folds into the GST N-terminal domain. The 131-residue stretch at 90-220 (DAMSSAKIRQ…LIEKRRIGAK (131 aa)) folds into the GST C-terminal domain.

This sequence belongs to the GST superfamily.

Functionally, glutathione S-transferase-like protein; part of the gene cluster that mediates the biosynthesis of the mycotoxin fusarin C. Within the cluster, FUS1, FUS2, FUS8 and FUS9 are sufficient for fusarin production. The other FUS cluster members are not essential for fusarin C biosynthesis. This is Glutathione S-transferase-like protein FUS3 from Gibberella moniliformis (strain M3125 / FGSC 7600) (Maize ear and stalk rot fungus).